The primary structure comprises 467 residues: Methionine aminopeptidase 2-1 (467 aa).

Over residues 1-10 the composition is skewed to basic and acidic residues; sequence MGSKSPDGHR. A disordered region spans residues 1–105; the sequence is MGSKSPDGHR…TPPRVSLPSI (105 aa). The span at 43–55 shows a compositional bias: acidic residues; sequence DGDDEDEDGDDDG. Residues 75 to 90 show a composition bias toward basic residues; it reads KKRKRKSNKKKKKKTS. His219 contributes to the substrate binding site. A divalent metal cation contacts are provided by Asp240, Asp251, and His320. Position 328 (His328) interacts with substrate. 2 residues coordinate a divalent metal cation: Glu353 and Glu448.

This sequence belongs to the peptidase M24A family. Methionine aminopeptidase eukaryotic type 2 subfamily. The cofactor is Co(2+). Requires Zn(2+) as cofactor. Mn(2+) is required as a cofactor. Fe(2+) serves as cofactor.

Its subcellular location is the cytoplasm. It carries out the reaction Release of N-terminal amino acids, preferentially methionine, from peptides and arylamides.. Functionally, cotranslationally removes the N-terminal methionine from nascent proteins. The N-terminal methionine is often cleaved when the second residue in the primary sequence is small and uncharged (Met-Ala-, Cys, Gly, Pro, Ser, Thr, or Val). In Arthroderma gypseum (strain ATCC MYA-4604 / CBS 118893) (Microsporum gypseum), this protein is Methionine aminopeptidase 2-1.